Here is a 437-residue protein sequence, read N- to C-terminus: Aspartokinase (437 aa).

Belongs to the aspartokinase family.

The catalysed reaction is L-aspartate + ATP = 4-phospho-L-aspartate + ADP. It functions in the pathway amino-acid biosynthesis; L-lysine biosynthesis via DAP pathway; (S)-tetrahydrodipicolinate from L-aspartate: step 1/4. It participates in amino-acid biosynthesis; L-methionine biosynthesis via de novo pathway; L-homoserine from L-aspartate: step 1/3. The protein operates within amino-acid biosynthesis; L-threonine biosynthesis; L-threonine from L-aspartate: step 1/5. This Chlamydia muridarum (strain MoPn / Nigg) protein is Aspartokinase (lysC).